The sequence spans 231 residues: Potassium/proton antiporter CemA (231 aa).

Helical transmembrane passes span 7 to 27, 104 to 124, 154 to 174, and 189 to 209; these read FIPL…SFTF, IHTI…SVYS, ILFL…ELMI, and IISF…KYWI.

The protein belongs to the CemA family.

The protein resides in the plastid. Its subcellular location is the chloroplast inner membrane. The catalysed reaction is K(+)(in) + H(+)(out) = K(+)(out) + H(+)(in). In terms of biological role, contributes to K(+)/H(+) antiport activity by supporting proton efflux to control proton extrusion and homeostasis in chloroplasts in a light-dependent manner to modulate photosynthesis. Prevents excessive induction of non-photochemical quenching (NPQ) under continuous-light conditions. Indirectly promotes efficient inorganic carbon uptake into chloroplasts. This Pisum sativum (Garden pea) protein is Potassium/proton antiporter CemA.